We begin with the raw amino-acid sequence, 408 residues long: Probable serine/threonine-protein kinase PBL16 (408 aa).

A lipid anchor (N-myristoyl glycine) is attached at glycine 2. A lipid anchor (S-palmitoyl cysteine) is attached at cysteine 4. Positions 17–50 (ANAKSESPKEQSPTVEDKHIKEVQKLPSNPKEVE) are disordered. Polar residues predominate over residues 18–30 (NAKSESPKEQSPT). Basic and acidic residues predominate over residues 31 to 40 (VEDKHIKEVQ). Position 65 is a phosphothreonine (threonine 65). The Protein kinase domain occupies 76 to 360 (FRQDRVLGGG…DIVDSLEPLQ (285 aa)). ATP is bound by residues 82–90 (LGGGGFGSV) and lysine 113. Residue tyrosine 159 is modified to Phosphotyrosine. The active-site Proton acceptor is aspartate 209. Serine 213 and serine 243 each carry phosphoserine. Phosphothreonine occurs at positions 244 and 249. Tyrosine 257 bears the Phosphotyrosine mark.

The protein belongs to the protein kinase superfamily. Ser/Thr protein kinase family. In terms of processing, palmitoylation at Cys-4 and Cys-6 are required for plasma membrane location.

It is found in the cell membrane. The enzyme catalyses L-seryl-[protein] + ATP = O-phospho-L-seryl-[protein] + ADP + H(+). It carries out the reaction L-threonyl-[protein] + ATP = O-phospho-L-threonyl-[protein] + ADP + H(+). In terms of biological role, may be involved in plant defense signaling. This is Probable serine/threonine-protein kinase PBL16 from Arabidopsis thaliana (Mouse-ear cress).